The chain runs to 715 residues: Fatty acid oxidation complex subunit alpha (715 aa).

Positions M1–A190 are enoyl-CoA hydratase/isomerase. Substrate is bound at residue D297. The interval H312–N715 is 3-hydroxyacyl-CoA dehydrogenase. NAD(+) is bound by residues M325, D344, V401–E403, K408, and S430. H451 acts as the For 3-hydroxyacyl-CoA dehydrogenase activity in catalysis. N454 provides a ligand contact to NAD(+). Substrate is bound by residues N501 and Y660.

It in the N-terminal section; belongs to the enoyl-CoA hydratase/isomerase family. In the C-terminal section; belongs to the 3-hydroxyacyl-CoA dehydrogenase family. In terms of assembly, heterotetramer of two alpha chains (FadB) and two beta chains (FadA).

The catalysed reaction is a (3S)-3-hydroxyacyl-CoA + NAD(+) = a 3-oxoacyl-CoA + NADH + H(+). It carries out the reaction a (3S)-3-hydroxyacyl-CoA = a (2E)-enoyl-CoA + H2O. It catalyses the reaction a 4-saturated-(3S)-3-hydroxyacyl-CoA = a (3E)-enoyl-CoA + H2O. The enzyme catalyses (3S)-3-hydroxybutanoyl-CoA = (3R)-3-hydroxybutanoyl-CoA. The catalysed reaction is a (3Z)-enoyl-CoA = a 4-saturated (2E)-enoyl-CoA. It carries out the reaction a (3E)-enoyl-CoA = a 4-saturated (2E)-enoyl-CoA. It functions in the pathway lipid metabolism; fatty acid beta-oxidation. Its function is as follows. Involved in the aerobic and anaerobic degradation of long-chain fatty acids via beta-oxidation cycle. Catalyzes the formation of 3-oxoacyl-CoA from enoyl-CoA via L-3-hydroxyacyl-CoA. It can also use D-3-hydroxyacyl-CoA and cis-3-enoyl-CoA as substrate. The sequence is that of Fatty acid oxidation complex subunit alpha from Pseudomonas entomophila (strain L48).